A 384-amino-acid polypeptide reads, in one-letter code: Geranylgeranyl pyrophosphate synthase (384 aa).

Disordered regions lie at residues 1-25 (MVPNANSNTVSLQSPNAIPPRTSST) and 39-78 (RPVPESDWLGQNNTRNRSSSTTAIPLTGMHATGPQDPARY). The segment covering 47-62 (LGQNNTRNRSSSTTAI) has biased composition (polar residues). Positions 112, 115, and 144 each coordinate isopentenyl diphosphate. 2 residues coordinate Mg(2+): Asp151 and Asp155. Arg160 contacts dimethylallyl diphosphate. Position 161 (Arg161) interacts with isopentenyl diphosphate. Residues Lys238, Thr239, and Gln272 each coordinate dimethylallyl diphosphate. Asp275 is a Mg(2+) binding site. The dimethylallyl diphosphate site is built by Asn279, Lys289, and Lys299.

Belongs to the FPP/GGPP synthase family. Mg(2+) serves as cofactor.

The catalysed reaction is isopentenyl diphosphate + dimethylallyl diphosphate = (2E)-geranyl diphosphate + diphosphate. The enzyme catalyses isopentenyl diphosphate + (2E)-geranyl diphosphate = (2E,6E)-farnesyl diphosphate + diphosphate. It carries out the reaction isopentenyl diphosphate + (2E,6E)-farnesyl diphosphate = (2E,6E,10E)-geranylgeranyl diphosphate + diphosphate. The protein operates within secondary metabolite biosynthesis. Catalyzes the trans-addition of the 3 molecules of isopentenyl diphosphate (IPP) onto dimethylallyl diphosphate (DMAPP) to form geranylgeranyl pyrophosphate (GGPP). GGPP is a precursor for the biosynthesis of many secondary metabolites, including the indole diterpenes nodulisporic acids (NA). The protein is Geranylgeranyl pyrophosphate synthase of Hypoxylon pulicicidum.